An 863-amino-acid polypeptide reads, in one-letter code: MDADHLLGASIIRIPPHHYIHVLDQNTNIARVEIGPLTYIRQDNERVLFAPVRMMMVPPRHYCVVLNPAVRDDEGQVQFDGSGQVKLRHADLEIRLAQDPFPLYPGEEIQKDVTPLQIVYPDTALRLQALLDFEEEGGEKRVAGDEWLFEGPGTYIPRKEVTVLEVIKATVIRENQAIRLRARKEGLDRSGVQRVTGEEWQVSKVGAYLPGAHEEVVDIVSAFILTDKKALHVRAIRPFRDAGGRDRRTGEEWLVTVADREAHIPSVAEEVVGVVDVTTLNSRQYCVIMDPVGADGKPQLGQKRVVKGERSFFLMPGEHLENGIQDVYVLSEEEGLVLRAVEAFIDTQGDEAEEEERESRAKKRGVQRRPGDRWMLRGPIEYVPPATVEVLLTRTAIPLDENEGIYVRDIKTGKVRAVIGQTYMLTQDEELWEKELPANVESLLAQSRDPLADRSDRGRSFGQAERDKTRVVSYRIPHNATVQVYDYREKKARVMFGPEMVMLGPDEQFTVLSLSGDKPKRPNVIKTICLLLGPDFCTDIITIETADHARLQLQLSYNWHFDLKQPADAAQAAALFSVPDFVGDACKAIASRIRGAVASVQFDDFHKNSNRIICSAVFGFDEKLAVRSSLRFGQNGLVISSVDIQSVEPVDQRTRDALQKSVQLAIEITTNSQEAAARHEAERLEQEARGRLERQKITDQAEAEKARKELLELEAQSAAVESTGAAKAEAQSRAEAARIQGEAAVEEAKLKAEAQKIEADSELARLCKAREQELNYKKQIDHLEVEKQQKLADIESQRFKHLMDNLGTETLKEMARAGPELQVKLLQSLGLKSTLITDGSSPINLFTTANGLLGSLQGKDKDE.

9 MVP repeats span residues 2-60 (DADH…VPPR), 61-115 (HYCV…DVTP), 116-168 (LQIV…EVIK), 169-221 (ATVI…DIVS), 222-276 (AFIL…GVVD), 277-327 (VTTL…IQDV), 328-396 (YVLS…TRTA), 397-471 (IPLD…KTRV), and 472-534 (VSYR…LLGP). The tract at residues 349-368 (GDEAEEEERESRAKKRGVQR) is disordered. The IQ domain maps to 677–706 (ARHEAERLEQEARGRLERQKITDQAEAEKA).

As to quaternary structure, the vault ribonucleoprotein particle is a huge (400 A x 670 A) cage structure of 12.9 MDa. It consists of a dimer of half-vaults, with each half-vault comprising 39 identical major vault protein (MVP) chains, PARP4 and one or more vault RNAs (vRNAs).

The protein localises to the cytoplasm. It localises to the nucleus. Required for normal vault structure. Vaults are multi-subunit structures that may act as scaffolds for proteins involved in signal transduction. Vaults may also play a role in nucleo-cytoplasmic transport. The polypeptide is Major vault protein (mvp) (Danio rerio (Zebrafish)).